The chain runs to 349 residues: MTYTLAEIAIKLDAKLIVPAALDEQNEALTQISGLATLAKAGTGQVAFLANSKYQQQLSSTNASAVIVSPDAVEACQVSALVMDNPYMGYAMLASLLDSTPKVSCGIHPNAVIADDVLIGENVSVGANTVIESGVQLADNVSIGAGCFIGHGAKIGESTILWANITIYHRVEIGHHCLIQASTVIGSDGFGYAPVKGQYKWHKIPQLGSVIIGDHVEIGASTTIDRGALDNTEIRDGVILDNQIQIAHNVIVGENTAIAGCTVIAGSTVIGKNCTIAGLVGVNGHITIADNCVFTGMSMVTKNISQAGVYSSGMPVVQNKEWNKTNARVKRLDSLTKRVKELEKLLAKN.

His-248 serves as the catalytic Proton acceptor.

It belongs to the transferase hexapeptide repeat family. LpxD subfamily. In terms of assembly, homotrimer.

The catalysed reaction is a UDP-3-O-[(3R)-3-hydroxyacyl]-alpha-D-glucosamine + a (3R)-hydroxyacyl-[ACP] = a UDP-2-N,3-O-bis[(3R)-3-hydroxyacyl]-alpha-D-glucosamine + holo-[ACP] + H(+). It participates in bacterial outer membrane biogenesis; LPS lipid A biosynthesis. Its function is as follows. Catalyzes the N-acylation of UDP-3-O-acylglucosamine using 3-hydroxyacyl-ACP as the acyl donor. Is involved in the biosynthesis of lipid A, a phosphorylated glycolipid that anchors the lipopolysaccharide to the outer membrane of the cell. The protein is UDP-3-O-acylglucosamine N-acyltransferase of Colwellia psychrerythraea (strain 34H / ATCC BAA-681) (Vibrio psychroerythus).